We begin with the raw amino-acid sequence, 186 residues long: Putative 3-methyladenine DNA glycosylase (186 aa).

The protein belongs to the DNA glycosylase MPG family.

The chain is Putative 3-methyladenine DNA glycosylase from Borrelia garinii subsp. bavariensis (strain ATCC BAA-2496 / DSM 23469 / PBi) (Borreliella bavariensis).